The primary structure comprises 139 residues: Mitochondrial intermembrane space import and assembly protein 40 (139 aa).

3 disulfides stabilise this stretch: Cys53–Cys55, Cys64–Cys97, and Cys74–Cys87. One can recognise a CHCH domain in the interval 61–105 (SGPCGEQFKSAFSCFHYSTEDIKGSDCIDQFRAMQECMQKYPDLY). 2 short sequence motifs (cx9C motif) span residues 64 to 74 (CGEQFKSAFSC) and 87 to 97 (CIDQFRAMQEC). A disordered region spans residues 104-139 (LYPQDEEEEEEAKPVEPVEETADTKASAAKEQGASS). Over residues 106–124 (PQDEEEEEEAKPVEPVEET) the composition is skewed to acidic residues.

Monomer. Can form homooligomers. Interacts with GFER and forms transient disulfide bonds with GFER. Interacts with MICU1. Interacts with COX19 forming transient intermolecular disulfide bridges. Interacts with COA7 through transient intermolecular disulfide bonds. Interacts with AIFM1; the interaction increases in presence of NADH. Interacts with NDUFB10. Post-translationally, forms intrachain disulfide bridges, but exists in different redox states.

Its subcellular location is the mitochondrion intermembrane space. In terms of biological role, central component of a redox-sensitive mitochondrial intermembrane space import machinery which is required for the biogenesis of respiratory chain complexes. Functions as a chaperone and catalyzes the formation of disulfide bonds in substrate proteins, such as COX17, COX19, MICU1 and COA7. Required for the import and folding of small cysteine-containing proteins (small Tim) in the mitochondrial intermembrane space (IMS). Required for the import of COA7 in the IMS. Precursor proteins to be imported into the IMS are translocated in their reduced form into the mitochondria. The oxidized form of CHCHD4/MIA40 forms a transient intermolecular disulfide bridge with the reduced precursor protein, resulting in oxidation of the precursor protein that now contains an intramolecular disulfide bond and is able to undergo folding in the IMS. Reduced CHCHD4/MIA40 is then reoxidized by GFER/ERV1 via a disulfide relay system. Mediates formation of disulfide bond in MICU1 in the IMS, promoting formation of the MICU1-MICU2 heterodimer that regulates mitochondrial calcium uptake. This is Mitochondrial intermembrane space import and assembly protein 40 (Chchd4) from Rattus norvegicus (Rat).